The sequence spans 379 residues: Putative FBD-associated F-box protein At5g38570 (379 aa).

The 47-residue stretch at 1–47 (MDNINGLPDDLLVKILSFVPTYVAVSTCVLSKRWEFLWMWLPNLEFV) folds into the F-box domain. The region spanning 295 to 345 (CWNQPSSVLECLLSSLKILNWSAYFGRPQDRDIAVYILKNACHLKTATFLT) is the FBD domain.

In Arabidopsis thaliana (Mouse-ear cress), this protein is Putative FBD-associated F-box protein At5g38570.